Here is a 1188-residue protein sequence, read N- to C-terminus: MAGHDVQYGKHRTRRSFSRIKEVLDLPNLIEIQTDSFQDFLDSGLKEVFEDVLPISNFTDTMELEFVGYEFKEPKYTLEEARIHDASYSAPIFVTFRLINKETGEIKTQEVFFGDFPIMTEMGTFIINGGERIIVSQLVRSPGVYFNDKVDKNGKVGYGSTVIPNRGAWLELETDSKDIAYTRIDRTRKIPFTTLVRALGFSGDDEIIDIFGDSELVRNTIEKDIHKNQSDSRTDEALKEIYERLRPGEPKTADSSRSLLTARFFDARRYDLAAVGRYKINKKLNIKTRLLNQIIAENLIDSETGEILVEAGTEMTRSVIESIEEQLDGDLNKFVYTPNDYAVVTEPVILQKFKVVSPVDPDRVVTIVGNANPDDKVRALTPADILAEMSYFLNLAEGLGKVDDIDHLGNRRIRAVGELLANQFRIGLARMERNVRERMSVQDNDVLTPQQIINIRPVTAAVKEFFGSSQLSQFMDQHNPLSELSHKRRLSALGPGGLTRDRAGYEVRDVHYTHYGRMCPIETPEGPNIGLINNLSSFGHLNKYGFIQTPYRKVDRVIGRVTNEIVWLTADEEDEFTVAQANSKLNPDGTFAEEIVMGRHQGNNQEFPASQVDFVDVSPKQVVAVATACIPFLENDDSNRALMGANMQRQAVPLIDPKAPYVGTGMEYQAAHDSGAAVIAQHNGKVVFSDAERVEVRREDGSLDVYHITKFRRSNSGTAYNQRTLVKIGDIVEKGDFIADGPSMEKGEMALGQNPIVAYMTWEGYNFEDAVIMSERLVKEDVYTSVHLEEFESETRDTKLGPEEITREVPNVGEEALKDLDEMGIIRIGAEVKEGDILVGKVTPKGEKDLSAEERLLHAIFGDKSREVRDTSLRVPHGGDGIVRDVKIFTRANGDELQSGVNMLVRVYIAQKRKIKVGDKMAGRHGNKGVVSRIVPVEDMPYLPDGTPVDIMLNPLGVPSRMNIGQVMELHLGMAARNLGIHIATPVFDGATSEDLWETVREAGMDSDAKTVLYDGRTGEPFDNRVSVGVMYMIKLHHMVDDKLHARSVGPYSLVTQQPLGGKAQFGGQRFGEMEVWALEAYGASNVLQEILTYKSDDVNGRLKAYEAITKGKPIPKPGVPESFRVLVKELQSLGLDMRVLDEDDNEVELRDLDEGEDDDVMHVDDLEKAREKQAQETQEIAESTEDN.

Belongs to the RNA polymerase beta chain family. As to quaternary structure, the RNAP catalytic core consists of 2 alpha, 1 beta, 1 beta' and 1 omega subunit. When a sigma factor is associated with the core the holoenzyme is formed, which can initiate transcription.

The catalysed reaction is RNA(n) + a ribonucleoside 5'-triphosphate = RNA(n+1) + diphosphate. In terms of biological role, DNA-dependent RNA polymerase catalyzes the transcription of DNA into RNA using the four ribonucleoside triphosphates as substrates. This chain is DNA-directed RNA polymerase subunit beta, found in Streptococcus equi subsp. zooepidemicus (strain H70).